Here is a 429-residue protein sequence, read N- to C-terminus: Ribosomal RNA small subunit methyltransferase B (429 aa).

S-adenosyl-L-methionine-binding positions include 254–260 (CAAPGGK), D277, D303, and D322. Catalysis depends on C375, which acts as the Nucleophile.

The protein belongs to the class I-like SAM-binding methyltransferase superfamily. RsmB/NOP family.

It is found in the cytoplasm. It carries out the reaction cytidine(967) in 16S rRNA + S-adenosyl-L-methionine = 5-methylcytidine(967) in 16S rRNA + S-adenosyl-L-homocysteine + H(+). In terms of biological role, specifically methylates the cytosine at position 967 (m5C967) of 16S rRNA. This Escherichia coli O157:H7 protein is Ribosomal RNA small subunit methyltransferase B.